The sequence spans 191 residues: Gastrokine-3 (191 aa).

Positions 1 to 30 are cleaved as a signal peptide; the sequence is MPLHSLERDNMRRLIAPSILVTVFLVPALA. Residue N33 is glycosylated (N-linked (GlcNAc...) asparagine). Residues 63–155 enclose the BRICHOS domain; it reads NSVQSEWDGV…LCRAVPTYFA (93 aa). The cysteines at positions 90 and 147 are disulfide-linked.

This sequence belongs to the gastrokine family. In terms of tissue distribution, expressed in stomach. Present in mucus cells at the base of antral glands, and Brunner glands of the duodenum. Present at lower levels in the mucus neck cell region of the fundus (at protein level).

It localises to the secreted. Inhibits gastric epithelial cell proliferation. This Mus musculus (Mouse) protein is Gastrokine-3 (Gkn3).